The chain runs to 146 residues: Ribosome maturation factor RimP (146 aa).

The protein belongs to the RimP family.

It is found in the cytoplasm. Required for maturation of 30S ribosomal subunits. This Dechloromonas aromatica (strain RCB) protein is Ribosome maturation factor RimP.